We begin with the raw amino-acid sequence, 439 residues long: MKNMLNIILTLTIIFIGLIKISISSDSGSSENGIYFYTYDTICEFTNSIRDDDQYELYYVQAPLMYAIYGDLFEKINAYHSGVGFYNLNGGPNISIDYFAGPTLEDALIPQNITKDSQGNYNLTWNTYGLIEVTNYINETYWSKRELIMYGLTGLQVKQYLSWAPIYNQTHPVYNLFSIASADASGSGDNGYLETILHNLGIGGGGGGSGSENLIVYQNSSTCDDFVWASFNTIYQLGGTLVGMQSNPPKDQITLFTTDEPTIVDYNNITQRNQLASFYINLMGIANKNESALQIFQELISLFNGTFYCYIDGVYYELHLSKPTPISFTYQPSPMPTGQRNSNSIETLNNCYSKSSTDNQSFFNRFSKIQIIFISIAIGFGVVIILYISIGIMVNKSRGKSGTNLIPNKKLWTSIGSKFKRDNNKNNYKPLLYNENTIQ.

Positions 1–24 are cleaved as a signal peptide; it reads MKNMLNIILTLTIIFIGLIKISIS. Residues asparagine 93, asparagine 112, asparagine 122, asparagine 138, asparagine 168, asparagine 219, asparagine 268, asparagine 289, asparagine 304, and asparagine 359 are each glycosylated (N-linked (GlcNAc...) asparagine). Residues 371-391 traverse the membrane as a helical segment; the sequence is IIFISIAIGFGVVIILYISIG.

It belongs to the CLN5 family.

It localises to the membrane. The protein is Cln5-like protein 3 (cln5lc) of Dictyostelium discoideum (Social amoeba).